We begin with the raw amino-acid sequence, 434 residues long: Trigger factor (434 aa).

In terms of domain architecture, PPIase FKBP-type spans 161-246 (EDRVTIDFTG…LKKVEERELP (86 aa)).

The protein belongs to the FKBP-type PPIase family. Tig subfamily.

The protein resides in the cytoplasm. It carries out the reaction [protein]-peptidylproline (omega=180) = [protein]-peptidylproline (omega=0). In terms of biological role, involved in protein export. Acts as a chaperone by maintaining the newly synthesized protein in an open conformation. Functions as a peptidyl-prolyl cis-trans isomerase. This Pectobacterium carotovorum subsp. carotovorum (strain PC1) protein is Trigger factor.